We begin with the raw amino-acid sequence, 186 residues long: MPTQRKIETVADLKQRLKRMQVTVVADYRGLSVADMTELRKKLRESGAEFVVAKNTLTLIAARETGHEAIEPLLAGPTALAFAYDDVPKFVKAINEFNRGPKKIIVRGGLVGTMLLNENVLDTVASLPTKEEVRAQVLGGLAAPVTGLAGIIAAPVNDIVNLLDATSKSILYALQARIDQLQPSAS.

It belongs to the universal ribosomal protein uL10 family. Part of the ribosomal stalk of the 50S ribosomal subunit. The N-terminus interacts with L11 and the large rRNA to form the base of the stalk. The C-terminus forms an elongated spine to which L12 dimers bind in a sequential fashion forming a multimeric L10(L12)X complex.

Forms part of the ribosomal stalk, playing a central role in the interaction of the ribosome with GTP-bound translation factors. This is Large ribosomal subunit protein uL10 from Roseiflexus sp. (strain RS-1).